Here is a 287-residue protein sequence, read N- to C-terminus: Energy-coupling factor transporter ATP-binding protein EcfA (287 aa).

One can recognise an ABC transporter domain in the interval 19-252; that stretch reads FEIQNVSFSY…EEFLASSALD (234 aa). 52 to 59 serves as a coordination point for ATP; it reads GHNGSGKS.

Belongs to the ABC transporter superfamily. Energy-coupling factor EcfA family. As to quaternary structure, forms a stable energy-coupling factor (ECF) transporter complex composed of 2 membrane-embedded substrate-binding proteins (S component), 2 ATP-binding proteins (A component) and 2 transmembrane proteins (T component).

It localises to the cell membrane. Functionally, ATP-binding (A) component of a common energy-coupling factor (ECF) ABC-transporter complex. Unlike classic ABC transporters this ECF transporter provides the energy necessary to transport a number of different substrates. This is Energy-coupling factor transporter ATP-binding protein EcfA from Malacoplasma penetrans (strain HF-2) (Mycoplasma penetrans).